A 140-amino-acid polypeptide reads, in one-letter code: MNSFALLLVCIQACLVQSVFSQCTSRAAVAADRGIIGGYGLGAPYGLGCGYGLEAPYGWAGYADYGYGLDAYGGIGEGNVAVAGELPVAGTTAVAGQVPIMGAVKFGGDVCAAGSVSIAGKCDCGCGEVYGYGLGAPYLY.

Positions M1–S21 are cleaved as a signal peptide.

This sequence belongs to the chorion protein family.

Functionally, this protein is one of many from the eggshell of the gypsy moth. The chain is Chorion class A protein Ld2/Ld41 from Lymantria dispar (Gypsy moth).